The following is a 369-amino-acid chain: Endophilin-A (369 aa).

In terms of domain architecture, BAR spans 18–248; it reads TEKMGGAEGT…LQEKRSEAES (231 aa). Residues 227 to 247 adopt a coiled-coil conformation; the sequence is QCADVLRGLQETLQEKRSEAE. Residues 275–294 show a composition bias toward low complexity; it reads GTPSHISSSASPLPSPMRSP. A disordered region spans residues 275–296; it reads GTPSHISSSASPLPSPMRSPAK. The 60-residue stretch at 305-364 folds into the SH3 domain; it reads QQQPCCQALYDFDPENPGELGFKENDIITLLNRVDDNWYEGAVNGRTGYFPQSYVQVQVP.

It belongs to the endophilin family.

The protein localises to the cytoplasm. It is found in the membrane. Required presynaptically at the neuromuscular junction. Implicated in synaptic vesicle endocytosis. The chain is Endophilin-A from Drosophila pseudoobscura pseudoobscura (Fruit fly).